Reading from the N-terminus, the 278-residue chain is 3-methyl-2-oxobutanoate hydroxymethyltransferase (278 aa).

D43 and D82 together coordinate Mg(2+). 3-methyl-2-oxobutanoate is bound by residues 43-44 (DS), D82, and K112. E114 contacts Mg(2+). The Proton acceptor role is filled by E181.

The protein belongs to the PanB family. As to quaternary structure, homodecamer; pentamer of dimers. Mg(2+) is required as a cofactor.

The protein localises to the cytoplasm. The enzyme catalyses 3-methyl-2-oxobutanoate + (6R)-5,10-methylene-5,6,7,8-tetrahydrofolate + H2O = 2-dehydropantoate + (6S)-5,6,7,8-tetrahydrofolate. The protein operates within cofactor biosynthesis; (R)-pantothenate biosynthesis; (R)-pantoate from 3-methyl-2-oxobutanoate: step 1/2. In terms of biological role, catalyzes the reversible reaction in which hydroxymethyl group from 5,10-methylenetetrahydrofolate is transferred onto alpha-ketoisovalerate to form ketopantoate. This Desulfitobacterium hafniense (strain DSM 10664 / DCB-2) protein is 3-methyl-2-oxobutanoate hydroxymethyltransferase.